Consider the following 126-residue polypeptide: Glycine cleavage system H protein (126 aa).

The 83-residue stretch at 22 to 104 folds into the Lipoyl-binding domain; sequence KAYIGITSFA…YEQAWMIVVE (83 aa). The residue at position 63 (K63) is an N6-lipoyllysine.

The protein belongs to the GcvH family. The glycine cleavage system is composed of four proteins: P, T, L and H. It depends on (R)-lipoate as a cofactor.

Its function is as follows. The glycine cleavage system catalyzes the degradation of glycine. The H protein shuttles the methylamine group of glycine from the P protein to the T protein. Functionally, is also involved in protein lipoylation via its role as an octanoyl/lipoyl carrier protein intermediate. This Brevibacillus brevis (strain 47 / JCM 6285 / NBRC 100599) protein is Glycine cleavage system H protein.